Here is a 279-residue protein sequence, read N- to C-terminus: Tryptophan synthase alpha chain (279 aa).

Residues glutamate 50 and aspartate 61 each act as proton acceptor in the active site.

This sequence belongs to the TrpA family. In terms of assembly, tetramer of two alpha and two beta chains.

It carries out the reaction (1S,2R)-1-C-(indol-3-yl)glycerol 3-phosphate + L-serine = D-glyceraldehyde 3-phosphate + L-tryptophan + H2O. The protein operates within amino-acid biosynthesis; L-tryptophan biosynthesis; L-tryptophan from chorismate: step 5/5. Its function is as follows. The alpha subunit is responsible for the aldol cleavage of indoleglycerol phosphate to indole and glyceraldehyde 3-phosphate. This is Tryptophan synthase alpha chain from Brucella melitensis biotype 2 (strain ATCC 23457).